The following is a 92-amino-acid chain: Small ribosomal subunit protein uS19 (92 aa).

It belongs to the universal ribosomal protein uS19 family.

Functionally, protein S19 forms a complex with S13 that binds strongly to the 16S ribosomal RNA. The protein is Small ribosomal subunit protein uS19 of Lactococcus lactis subsp. lactis (strain IL1403) (Streptococcus lactis).